The sequence spans 673 residues: UvrABC system protein B (673 aa).

The 387-residue stretch at 28–414 folds into the Helicase ATP-binding domain; sequence ASILQNKRSQ…EAGGEIVEQL (387 aa). 41–48 serves as a coordination point for ATP; sequence GITGSGKT. A Beta-hairpin motif is present at residues 94-117; sequence YYDYYQPEAYVPRTDTYIEKDMSI. Positions 433–595 constitute a Helicase C-terminal domain; sequence QVDDCLAEIR…ITPRTVKREI (163 aa). The region spanning 633–668 is the UVR domain; it reads RLKIKECEKEMKKAAKEFRFEEAADWRDQMRRYQQI.

This sequence belongs to the UvrB family. In terms of assembly, forms a heterotetramer with UvrA during the search for lesions. Interacts with UvrC in an incision complex.

It localises to the cytoplasm. In terms of biological role, the UvrABC repair system catalyzes the recognition and processing of DNA lesions. A damage recognition complex composed of 2 UvrA and 2 UvrB subunits scans DNA for abnormalities. Upon binding of the UvrA(2)B(2) complex to a putative damaged site, the DNA wraps around one UvrB monomer. DNA wrap is dependent on ATP binding by UvrB and probably causes local melting of the DNA helix, facilitating insertion of UvrB beta-hairpin between the DNA strands. Then UvrB probes one DNA strand for the presence of a lesion. If a lesion is found the UvrA subunits dissociate and the UvrB-DNA preincision complex is formed. This complex is subsequently bound by UvrC and the second UvrB is released. If no lesion is found, the DNA wraps around the other UvrB subunit that will check the other stand for damage. The polypeptide is UvrABC system protein B (Protochlamydia amoebophila (strain UWE25)).